The sequence spans 2334 residues: MKKRKRRNFKRFIAAFLVLALMISLVPADVLAKSTEEENGNRIAADDPEETLQKEQTEEAVPFDPKDINKEGEITSERTENTKLYYEGDGVYKQEVYLDPIHTKETPDADWEDISPELKESTSKQVETENAILNSDFQKQMKNGLYATFEHNDHKVTYSLAEAKGPNKTSLTPKDTSADYKTDSNEIVYPDVFPNIDLQTFTFNENIKEDLVLHQYNGYNTFTFQLKTDLQAKEQEDGSIDFSDEKGKVVFSVPKPFMTDSKLDELSGEVERSDKVSYKLEKNEEGYLLHLTADENWLKDPERVYPVSIDPSTSLSVSSDTFVMSAYPTTNYSASSQKWDANLKAYVLKTGYYDKTTGTNYAFMKFNNLKPIQNMTVTKATLKTYVAHSYYGTKATGLWLDTVNSNYDNAKVTWNTKPASKNIGKADVHKGQWASYDVTAAVKSWNSGGANYGFKLHTNGNGKEYWKKLISSANSANKPYIEVTYTIPKGNTPTIKAYHNGDSTGYFDISWKKVEGAKGYKVWIYNGKEYQAISAGNVTSWSTKGKKIWPTSAEIASKRYKLHLDGKDGAELALDPSPVYKNSGGSYATSKNYWIGVSAIFDQGEGAMSAPAKPVIPNVGKAQAPSAKGYNNGNATGYFDLSWKAVSGATGYKVQVFNGKGFETLDLGNQTSWTTKGKKIWPTSAEIKAGKYALHLKDGSGAELPINPGPTYKNAGGDGAKRNYSFKIIAYNKDGEAIASPAATPALPDIARPKNVTGYLYTNTKSSQTGYVNLIWEKVQNAKGYKVNIYNGKEYQSFDVGDADHWTTQNKNIWPTSEEIKAGSYKLHTDGKGGELALDPSPVYNNANGNYKGKKNYSFTLVAYDANGETIPTAPFNPTFHEGAEFLGTEEYWSIIDIPSGQLNGATGNVIVNEEDLSIDGRGPGLGLSRTYNSLDSSDHLFGQGWYADAETSVISTDGGAMYIDEDATTHRFTKKADGTYQPPTGVYLELTETADQFILKTKDQTNAYFNKKGGKLQKVVDGHNNATVYTYNDKNQLTAITDASGRKLTFTYDENGHVTSITGPKNKKVTYSYENDLLKKVTDTDGTVTSYDYDSEGRLVKQYSANSTEAKPVFTEYQYSGHRLEKAINAKKETYVYSYDADKKTLLMTQPNGRKVQYGYNEAGNPIQVIDDAEGLKITTNTKYEGNNVVEDVDPNDVGTGKATESYQYDKDGNVTSVKDAYGTETYEYNKNNDVTKMKDTEGNVTDIAYDGLDAVSETDQSGKSSSAAVYDKYGNQIQSSKDLSASTNILKDGSFEAQKSGWNLTASKDSGKISVIADKSGVLSGSKALEVLSQSTSAGTDHGYSSATQTVELEPNTTYTLSGKIKTDLAKSRAYFNIDLRDKDQKRIQWIHNEYSALAGKNDWTKRQITFTTPANAGKAVVYMEVDHKDKDGKGKAWFDEVQLEKGEVSSSYNPVQNSSFTSATENWNVSGASVDSEEGFNDDVSLKAARTSASQAGSVTKQTVVLGQSANDKPVYLTLTGMSKASSVKFTDEKDYSLQANVTYADGSTGIYNAKFPSGTQEWNRAAVVIPKTKPINKVDISILFQKSATGTVWFDDIRLIEGSLLTKSTYDSNGNYVTKEEDELGYATSTDYDETGKKTSETDAKGEKTTYTYDQADQLTNMTLSNGTSILHSYDKEGNEVSKTIRAGADQTYKFEYDVMGKLVKTTDPLGNVLASEYDANSNLTKTISPNGNEVSLSYDGTDRVKSKSYNGTEKYIFTYDKNGNETSVVNKEQNTTKKRTFDNKNRLTELTDRGGSQTWTYPSDSDKLKTFSWIHGDQKGTNQFTYNKLDQMIEMKDSTSSYSFDYDENGNVQTFITGNGGGTSFSYDERNLVSSLHIGDKNGGDILTESYEYDANGNRTTINSSASGKVQYEYGKLNQLVKETHEDGTVIEYTYDGFGNRKTVTTIKDGSSKTVNASFNIMNQLTKVNDESISYDKNGNRTSDGKFTYTWDAEDNLTAVTKKGEDKPFATYKYDEKGNRIQKTVNGKVTNYFYDGDSLNVLYETDADNNVTKSYTYGDSGQLLSYTENGKKYFYHYNAHGDIIAISDSTGKTVAKYQYDAWGNPTKTEASDEVKDNRYRYAGYQYDEETGLYYLMARYYEPRNGVFLSLDPDPGSDGDSLDQNGYAYGNNNPVMNVDPDGHWVWLVVNAGFAAYDGYKAYKSGKGWKGAAWAAASNFGPGKIFKGASRAYKFTKKAVKITGHTRHGLNQSIGRNGGRGVNLRAKLNAVRSPKKVIKQPNGATKYVGKKATVVLNKRGKVITAYGSSRAKGSKHVFHTHGKGNKSKRRR.

A signal peptide (or 32) is located at residues 1-28; the sequence is MKKRKRRNFKRFIAAFLVLALMISLVPA. The segment at 36–59 is disordered; it reads EEENGNRIAADDPEETLQKEQTEE. Tandem repeats lie at residues 504–605, 636–736, 769–869, 1021–1040, 1042–1061, 1063–1082, 1083–1102, 1109–1128, 1129–1148, 1150–1169, 1174–1193, 1199–1218, 1219–1238, 1646–1665, 1667–1686, 1690–1709, 1711–1730, 1732–1751, 1753–1772, 1795–1814, 1820–1839, 1840–1859, 1861–1880, 1887–1906, 1908–1927, and 1929–1948. Residues 504-869 form a 3 X 101 AA approximate tandem repeats region; sequence TGYFDISWKK…TLVAYDANGE (366 aa). Residues 1021 to 2139 are 31 X 21 AA approximate tandem repeats of X(4)-G-X(4)-[YF]-X-D-X(2)-G-X(4); that stretch reads VDGHNNATVY…QYDEETGLYY (1119 aa). YD repeat units lie at residues 1032–1065 and 1075–1103; these read YNDK…ITGP and ENDL…LVKQ. A YD 3 repeat occupies 1636-1671; the sequence is YDETGKKTSETDAKGEKTTYTYDQADQLTNMTLSNG. A YD 4 repeat occupies 1898–1935; that stretch reads YDANGNRTTINSSASGKVQYEYGKLNQLVKETHEDGTV. A 2-24; approximate repeat occupies 1969 to 1982; the sequence is QLTKVNDESISYDK. 7 consecutive repeat copies span residues 1983 to 2002, 2008 to 2027, 2028 to 2047, 2051 to 2070, 2071 to 2090, 2093 to 2112, and 2120 to 2139. The YD 5 repeat unit spans residues 2082-2113; sequence YNAHGDIIAISDSTGKTVAKYQYDAWGNPTKT. A disordered region spans residues 2312-2334; it reads SRAKGSKHVFHTHGKGNKSKRRR. Basic residues predominate over residues 2315–2334; the sequence is KGSKHVFHTHGKGNKSKRRR.

This sequence belongs to the RHS/WapA nuclease family. Identified in the extracellular proteome as many processing products ranging from over 85 kDa to about 30 kDa. One of these probably starts on Ser-1726. Two forms are known as CWBP62 and CWBP105.

The protein localises to the secreted. It is found in the cell wall. Its activity is regulated as follows. Detected in exponentially growing cells as many processing products, protein disappears upon entry into stationary phase with the concomitant appearance of smaller products. The large products persist in the absence of the extracellular serine protease Epr. Functionally, toxic component of a toxin-immunity protein module, which functions as a cellular contact-dependent growth inhibition (CDI) system. A site-specific general tRNA nuclease, the C-terminus (residues 2201-2334) removes 2 or 4 nucleotides from the 3' end of at least 4 tRNAs (upon expression in E.coli), possibly endonucleolytically. The nuclease activity is neutralized by expression of the cognate immunity protein WapI from the same strain, but not its homolog from 2 other B.subtilis strains. The C-terminus cannot be expressed on its own in E.coli, however it can be cloned in the presence of its cognate immunity protein gene. Cell contact is necessary for growth inhibition. Unlike the LXG toxin-immunity modules, WapAI mediates competition under shaking culture conditions. This is tRNA nuclease WapA (wapA) from Bacillus subtilis (strain 168).